A 161-amino-acid polypeptide reads, in one-letter code: 2-C-methyl-D-erythritol 2,4-cyclodiphosphate synthase (161 aa).

Positions 8 and 10 each coordinate a divalent metal cation. Residues 8-10 (DLH) and 34-35 (HS) each bind 4-CDP-2-C-methyl-D-erythritol 2-phosphate. His42 provides a ligand contact to a divalent metal cation. Residues 56-58 (DIG) and Arg142 each bind 4-CDP-2-C-methyl-D-erythritol 2-phosphate.

It belongs to the IspF family. As to quaternary structure, homotrimer. A divalent metal cation serves as cofactor.

It catalyses the reaction 4-CDP-2-C-methyl-D-erythritol 2-phosphate = 2-C-methyl-D-erythritol 2,4-cyclic diphosphate + CMP. The protein operates within isoprenoid biosynthesis; isopentenyl diphosphate biosynthesis via DXP pathway; isopentenyl diphosphate from 1-deoxy-D-xylulose 5-phosphate: step 4/6. In terms of biological role, involved in the biosynthesis of isopentenyl diphosphate (IPP) and dimethylallyl diphosphate (DMAPP), two major building blocks of isoprenoid compounds. Catalyzes the conversion of 4-diphosphocytidyl-2-C-methyl-D-erythritol 2-phosphate (CDP-ME2P) to 2-C-methyl-D-erythritol 2,4-cyclodiphosphate (ME-CPP) with a corresponding release of cytidine 5-monophosphate (CMP). This Treponema denticola (strain ATCC 35405 / DSM 14222 / CIP 103919 / JCM 8153 / KCTC 15104) protein is 2-C-methyl-D-erythritol 2,4-cyclodiphosphate synthase.